We begin with the raw amino-acid sequence, 161 residues long: Lipoprotein signal peptidase (161 aa).

Helical transmembrane passes span 9–29, 63–83, and 88–108; these read ISLLMTFIVLVFDQVSKWLIT, KMLFFYIITIIILIVLVIFYI, and FNLFMQVAISLLFAGALGNFI. Active-site residues include aspartate 118 and aspartate 136. The helical transmembrane segment at 131–151 threads the bilayer; that stretch reads IFNIADSSLTIGVIFVIITLI.

It belongs to the peptidase A8 family.

The protein localises to the cell membrane. It catalyses the reaction Release of signal peptides from bacterial membrane prolipoproteins. Hydrolyzes -Xaa-Yaa-Zaa-|-(S,diacylglyceryl)Cys-, in which Xaa is hydrophobic (preferably Leu), and Yaa (Ala or Ser) and Zaa (Gly or Ala) have small, neutral side chains.. It participates in protein modification; lipoprotein biosynthesis (signal peptide cleavage). This protein specifically catalyzes the removal of signal peptides from prolipoproteins. In Staphylococcus epidermidis (strain ATCC 35984 / DSM 28319 / BCRC 17069 / CCUG 31568 / BM 3577 / RP62A), this protein is Lipoprotein signal peptidase.